Here is a 122-residue protein sequence, read N- to C-terminus: Large ribosomal subunit protein bL12 (122 aa).

This sequence belongs to the bacterial ribosomal protein bL12 family. As to quaternary structure, homodimer. Part of the ribosomal stalk of the 50S ribosomal subunit. Forms a multimeric L10(L12)X complex, where L10 forms an elongated spine to which 2 to 4 L12 dimers bind in a sequential fashion. Binds GTP-bound translation factors.

Functionally, forms part of the ribosomal stalk which helps the ribosome interact with GTP-bound translation factors. Is thus essential for accurate translation. The protein is Large ribosomal subunit protein bL12 of Glaesserella parasuis serovar 5 (strain SH0165) (Haemophilus parasuis).